A 373-amino-acid polypeptide reads, in one-letter code: P2Y purinoceptor 1 (373 aa).

Topologically, residues 1–51 (MTEVPWSAVPNGTDAAFLAGLGSLWGNSTIASTAAVSSSFRCALIKTGFQF) are extracellular. N-linked (GlcNAc...) asparagine glycosylation is found at Asn11 and Asn27. Disulfide bonds link Cys42–Cys296 and Cys124–Cys202. Residue Lys46 coordinates ADP. Residues 52 to 74 (YYLPAVYILVFIIGFLGNSVAIW) traverse the membrane as a helical segment. Residues 75 to 87 (MFVFHMKPWSGIS) lie on the Cytoplasmic side of the membrane. Residues 88-109 (VYMFNLALADFLYVLTLPALIF) form a helical membrane-spanning segment. The Extracellular segment spans residues 110 to 125 (YYFNKTDWIFGDVMCK). N-linked (GlcNAc...) asparagine glycosylation is present at Asn113. Residues 126–147 (LQRFIFHVNLYGSILFLTCISA) traverse the membrane as a helical segment. Topologically, residues 148 to 166 (HRYSGVVYPLKSLGRLKKK) are cytoplasmic. A helical transmembrane segment spans residues 167-188 (NAIYVSVLVWLIVVVAISPILF). The Extracellular portion of the chain corresponds to 189–214 (YSGTGIRKNKTVTCYDSTSDEYLRSY). An N-linked (GlcNAc...) asparagine glycan is attached at Asn197. Residue 203–205 (YDS) coordinates ADP. The chain crosses the membrane as a helical span at residues 215 to 237 (FIYSMCTTVAMFCIPLVLILGCY). The Cytoplasmic portion of the chain corresponds to 238–260 (GLIVRALIYKDLDNSPLRRKSIY). A helical membrane pass occupies residues 261–284 (LVIIVLTVFAVSYIPFHVMKTMNL). ADP is bound by residues 283–287 (NLRAR), 303–306 (YATY), and Arg310. At 285–303 (RARLDFQTPEMCDFNDRVY) the chain is on the extracellular side. The helical transmembrane segment at 304–325 (ATYQVTRGLASLNSCVDPILYF) threads the bilayer. Residues 326 to 373 (LAGDTFRRRLSRATRKASRRSEANLQSKSEEMTLNILSEFKQNGDTSL) are Cytoplasmic-facing.

Belongs to the G-protein coupled receptor 1 family. In terms of tissue distribution, expressed in muscle, heart, liver, kidney, lung, brain, spleen, but not in testis.

It is found in the cell membrane. Receptor for extracellular adenine nucleotides such as ADP. In platelets, binding to ADP leads to mobilization of intracellular calcium ions via activation of phospholipase C, a change in platelet shape, and ultimately platelet aggregation. The chain is P2Y purinoceptor 1 (P2ry1) from Rattus norvegicus (Rat).